We begin with the raw amino-acid sequence, 632 residues long: Chaperone protein HtpG (632 aa).

An a; substrate-binding region spans residues 1 to 339 (MAHETMSFQA…SADLPLNVSR (339 aa)). The interval 340-559 (EILQESRDVK…DNDMSGYLQR (220 aa)) is b. Positions 560 to 632 (MLKAAGQNAP…TNALLLSRAA (73 aa)) are c.

It belongs to the heat shock protein 90 family. Homodimer.

Its subcellular location is the cytoplasm. Molecular chaperone. Has ATPase activity. This is Chaperone protein HtpG from Burkholderia cenocepacia (strain HI2424).